The following is a 271-amino-acid chain: Ribosomal RNA small subunit methyltransferase A (271 aa).

S-adenosyl-L-methionine is bound by residues L20, G45, E66, D90, and N112.

This sequence belongs to the class I-like SAM-binding methyltransferase superfamily. rRNA adenine N(6)-methyltransferase family. RsmA subfamily.

The protein resides in the cytoplasm. The enzyme catalyses adenosine(1518)/adenosine(1519) in 16S rRNA + 4 S-adenosyl-L-methionine = N(6)-dimethyladenosine(1518)/N(6)-dimethyladenosine(1519) in 16S rRNA + 4 S-adenosyl-L-homocysteine + 4 H(+). Its function is as follows. Specifically dimethylates two adjacent adenosines (A1518 and A1519) in the loop of a conserved hairpin near the 3'-end of 16S rRNA in the 30S particle. May play a critical role in biogenesis of 30S subunits. This chain is Ribosomal RNA small subunit methyltransferase A, found in Blochmanniella floridana.